Consider the following 444-residue polypeptide: MSGTKLEDSPPCRNWSSASELNETQEPFLNPTDYDDEEFLRYLWREYLHPKEYEWVLIAGYIIVFVVALIGNVLVCVAVWKNHHMRTVTNYFIVNLSLADVLVTITCLPATLVVDITETWFFGQSLCKVIPYLQTVSVSVSVLTLSCIALDRWYAICHPLMFKSTAKRARNSIVIIWIVSCIIMIPQAIVMECSTVFPGLANKTTLFTVCDERWGGEIYPKMYHICFFLVTYMAPLCLMVLAYLQIFRKLWCRQIPGTSSVVQRKWKPLQPVSQPRGPGQPTKSRMSAVAAEIKQIRARRKTARMLMIVLLVFAICYLPISILNVLKRVFGMFAHTEDRETVYAWFTFSHWLVYANSAANPIIYNFLSGKFREEFKAAFSCCCLGVHHRQEDRLTRGRTSTESRKSLTTQISNFDNISKLSEQVVLTSISTLPAANGAGPLQNW.

Over residues 1–10 the composition is skewed to basic and acidic residues; it reads MSGTKLEDSP. The interval 1-20 is disordered; the sequence is MSGTKLEDSPPCRNWSSASE. Residues 1–54 are Extracellular-facing; it reads MSGTKLEDSPPCRNWSSASELNETQEPFLNPTDYDDEEFLRYLWREYLHPKEYE. N-linked (GlcNAc...) asparagine glycans are attached at residues Asn14 and Asn22. Residues 33 to 49 are required for response to orexin-A; the sequence is DYDDEEFLRYLWREYLH. Residues 55-75 traverse the membrane as a helical segment; sequence WVLIAGYIIVFVVALIGNVLV. The Cytoplasmic portion of the chain corresponds to 76–88; sequence CVAVWKNHHMRTV. A helical membrane pass occupies residues 89 to 110; it reads TNYFIVNLSLADVLVTITCLPA. Over 111 to 127 the chain is Extracellular; it reads TLVVDITETWFFGQSLC. A disulfide bridge connects residues Cys127 and Cys210. Residues 128–150 form a helical membrane-spanning segment; the sequence is KVIPYLQTVSVSVSVLTLSCIAL. Topologically, residues 151–170 are cytoplasmic; sequence DRWYAICHPLMFKSTAKRAR. A helical membrane pass occupies residues 171-191; it reads NSIVIIWIVSCIIMIPQAIVM. Over 192-222 the chain is Extracellular; it reads ECSTVFPGLANKTTLFTVCDERWGGEIYPKM. Asn202 is a glycosylation site (N-linked (GlcNAc...) asparagine). The chain crosses the membrane as a helical span at residues 223–243; it reads YHICFFLVTYMAPLCLMVLAY. The Cytoplasmic segment spans residues 244-304; the sequence is LQIFRKLWCR…QIRARRKTAR (61 aa). The chain crosses the membrane as a helical span at residues 305–326; the sequence is MLMIVLLVFAICYLPISILNVL. Asn324 serves as a coordination point for suvorexant. The Extracellular segment spans residues 327–342; it reads KRVFGMFAHTEDRETV. A helical membrane pass occupies residues 343–366; sequence YAWFTFSHWLVYANSAANPIIYNF. At 367 to 444 the chain is on the cytoplasmic side; it reads LSGKFREEFK…ANGAGPLQNW (78 aa).

This sequence belongs to the G-protein coupled receptor 1 family.

It localises to the cell membrane. In terms of biological role, nonselective, high-affinity receptor for both orexin-A and orexin-B neuropeptides. Triggers an increase in cytoplasmic Ca(2+) levels in response to orexin-A binding. The sequence is that of Orexin receptor type 2 (HCRTR2) from Homo sapiens (Human).